The sequence spans 843 residues: Aminopeptidase N (843 aa).

Residues Glu120 and Gly252–Asn256 contribute to the substrate site. His288 provides a ligand contact to Zn(2+). Glu289 functions as the Proton acceptor in the catalytic mechanism. 2 residues coordinate Zn(2+): His292 and Glu311.

Belongs to the peptidase M1 family. Monomer. Zn(2+) is required as a cofactor.

It localises to the cytoplasm. It carries out the reaction Release of an N-terminal amino acid, Xaa-|-Yaa- from a peptide, amide or arylamide. Xaa is preferably Ala, but may be most amino acids including Pro (slow action). When a terminal hydrophobic residue is followed by a prolyl residue, the two may be released as an intact Xaa-Pro dipeptide.. Its function is as follows. Aminopeptidase with broad substrate specificity to several peptides. This Lactobacillus delbrueckii subsp. lactis protein is Aminopeptidase N (pepN).